Here is a 122-residue protein sequence, read N- to C-terminus: Large ribosomal subunit protein uL14c (122 aa).

This sequence belongs to the universal ribosomal protein uL14 family. Part of the 50S ribosomal subunit.

Its subcellular location is the plastid. It is found in the chloroplast. Functionally, binds to 23S rRNA. In Mesostigma viride (Green alga), this protein is Large ribosomal subunit protein uL14c.